A 245-amino-acid chain; its full sequence is Large ribosomal subunit protein uL29m (245 aa).

2 stretches are compositionally biased toward low complexity: residues 36 to 49 (SFNS…TSSS) and 234 to 245 (STKSETTTSKNI). Disordered stretches follow at residues 36–98 (SFNS…NPDH) and 207–245 (RPSP…SKNI).

Belongs to the universal ribosomal protein uL29 family. Component of the mitochondrial large ribosomal subunit. Mature mitochondrial ribosomes consist of a small (37S) and a large (54S) subunit. The 37S subunit contains at least 33 different proteins and 1 molecule of RNA (15S). The 54S subunit contains at least 45 different proteins and 1 molecule of RNA (21S).

It localises to the mitochondrion. The sequence is that of Large ribosomal subunit protein uL29m (MRPL4) from Coccidioides immitis (strain RS) (Valley fever fungus).